The primary structure comprises 365 residues: 2'-hydroxybiphenyl-2-sulfinate desulfinase (365 aa).

The active site involves C27. The 2'-hydroxybiphenyl-2-sulfinate site is built by C27, H60, and R70. R70 is an active-site residue.

Belongs to the DszB desulfinase family. In terms of assembly, monomer.

The protein localises to the cytoplasm. The enzyme catalyses 2'-hydroxybiphenyl-2-sulfinate + H2O = biphenyl-2-ol + sulfite + H(+). It participates in sulfur metabolism; dibenzothiophene degradation. Its function is as follows. Catalyzes the third and final step of the '4S' desulfurization pathway that removes covalently bound sulfur from dibenzothiophene (DBT) without breaking carbon-carbon bonds. Oxidizes 2-(2'-hydroxyphenyl)benzene sulphinate (HBPS) to 2-hydroxybiphenyl (HBP) plus sulfite. The rate-limiting step of the '4S' desulfurization pathway. The chain is 2'-hydroxybiphenyl-2-sulfinate desulfinase from Rhodococcus erythropolis (Arthrobacter picolinophilus).